We begin with the raw amino-acid sequence, 393 residues long: Methylthioribose-1-phosphate isomerase (393 aa).

The active-site Proton donor is the aspartate 265.

Belongs to the eIF-2B alpha/beta/delta subunits family. MtnA subfamily.

The protein resides in the cytoplasm. It localises to the nucleus. The catalysed reaction is 5-(methylsulfanyl)-alpha-D-ribose 1-phosphate = 5-(methylsulfanyl)-D-ribulose 1-phosphate. It participates in amino-acid biosynthesis; L-methionine biosynthesis via salvage pathway; L-methionine from S-methyl-5-thio-alpha-D-ribose 1-phosphate: step 1/6. In terms of biological role, catalyzes the interconversion of methylthioribose-1-phosphate (MTR-1-P) into methylthioribulose-1-phosphate (MTRu-1-P). This Cryptococcus neoformans var. neoformans serotype D (strain B-3501A) (Filobasidiella neoformans) protein is Methylthioribose-1-phosphate isomerase.